Consider the following 337-residue polypeptide: Phosphate acyltransferase (337 aa).

The protein belongs to the PlsX family. As to quaternary structure, homodimer. Probably interacts with PlsY.

Its subcellular location is the cytoplasm. It carries out the reaction a fatty acyl-[ACP] + phosphate = an acyl phosphate + holo-[ACP]. It participates in lipid metabolism; phospholipid metabolism. Functionally, catalyzes the reversible formation of acyl-phosphate (acyl-PO(4)) from acyl-[acyl-carrier-protein] (acyl-ACP). This enzyme utilizes acyl-ACP as fatty acyl donor, but not acyl-CoA. The polypeptide is Phosphate acyltransferase (Listeria innocua serovar 6a (strain ATCC BAA-680 / CLIP 11262)).